The following is a 169-amino-acid chain: Cell division inhibitor SulA (169 aa).

The ftsZ binding stretch occupies residues 106–112 (ALRTGNY). Positions 162 to 169 (KIHSNLYH) are lon protease binding.

The protein belongs to the SulA family. In terms of assembly, interacts with FtsZ. In terms of processing, is rapidly cleaved and degraded by the Lon protease once DNA damage is repaired.

Functionally, component of the SOS system and an inhibitor of cell division. Accumulation of SulA causes rapid cessation of cell division and the appearance of long, non-septate filaments. In the presence of GTP, binds a polymerization-competent form of FtsZ in a 1:1 ratio, thus inhibiting FtsZ polymerization and therefore preventing it from participating in the assembly of the Z ring. This mechanism prevents the premature segregation of damaged DNA to daughter cells during cell division. The chain is Cell division inhibitor SulA from Salmonella gallinarum (strain 287/91 / NCTC 13346).